Reading from the N-terminus, the 271-residue chain is Glutamate racemase (271 aa).

Substrate contacts are provided by residues 10–11 (DS) and 42–43 (YG). Residue C73 is the Proton donor/acceptor of the active site. 74–75 (NT) provides a ligand contact to substrate. Catalysis depends on C183, which acts as the Proton donor/acceptor. 184-185 (TH) serves as a coordination point for substrate.

This sequence belongs to the aspartate/glutamate racemases family.

The catalysed reaction is L-glutamate = D-glutamate. The protein operates within cell wall biogenesis; peptidoglycan biosynthesis. In terms of biological role, provides the (R)-glutamate required for cell wall biosynthesis. The protein is Glutamate racemase of Lactococcus lactis subsp. lactis (strain IL1403) (Streptococcus lactis).